Consider the following 2729-residue polypeptide: 3-methylorcinaldehyde synthase (2729 aa).

The segment at L99 to L238 is N-terminal acylcarrier protein transacylase domain (SAT). Over residues S361–G373 the composition is skewed to polar residues. A disordered region spans residues S361–H391. One can recognise a Ketosynthase family 3 (KS3) domain in the interval D397–Q828. Catalysis depends on for beta-ketoacyl synthase activity residues C571, H706, and H748. Positions F942–V1230 are malonyl-CoA:ACP transacylase (MAT) domain. S1029 acts as the For acyl/malonyl transferase activity in catalysis. The tract at residues E1345–D1479 is N-terminal hotdog fold. The PKS/mFAS DH domain occupies E1345–E1669. The segment at K1374–R1665 is product template (PT) domain. Catalysis depends on H1380, which acts as the Proton acceptor; for dehydratase activity. Residues D1513 to E1669 are C-terminal hotdog fold. The active-site Proton donor; for dehydratase activity is the D1575. Residues A1682 to A1701 are compositionally biased toward low complexity. A disordered region spans residues A1682 to G1726. Residues T1707–G1716 are compositionally biased toward polar residues. The region spanning Q1750 to L1824 is the Carrier domain. The residue at position 1784 (S1784) is an O-(pantetheine 4'-phosphoryl)serine. The segment covering T1835–S1868 has biased composition (low complexity). Residues T1835–M1874 are disordered. Positions E2086–T2254 are methyltransferase (C-MeT) domain. The reductase (R) domain stretch occupies residues I2344 to R2599.

Its pathway is secondary metabolite biosynthesis; terpenoid biosynthesis. Functionally, non-reducing polyketide synthase; part of the gene cluster that mediates the biosynthesis of xenovulene A, an unusual meroterpenoid that has potent inhibitory effects on the human gamma-aminobutyrate A (GABAA) benzodiazepine receptor. The first step of xenovulene A biosynthesis is the biosynthesis of 3-methylorcinaldehyde performed by the non-reducing polyketide synthase aspks1. The salicylate hydroxylase asL1 then catalyzes the oxidative dearomatization of 3-methylorcinaldehyde to yield a dearomatized hydroxycyclohexadione. The 2-oxoglutarate-dependent dioxygenase asL3 further catalyzes the oxidative ring expansion to provide the first tropolone metabolite. The cytochrome P450 monooxygenase asR2 allows the synthesis of tropolone hemiacetal. In parallel, a previously unrecognised class of terpene cyclase, asR6, produces alpha-humulene from farnesylpyrophosphate (FPP). The putative Diels-Alderase asR5 probably catalyzes the formation of the tropolone-humulene skeleton by linking humulene and the polyketide moiety. Oxidative-ring contractions catalyzed by asL4 and asL6 then processively remove carbon atoms from the polyketide to yield xenovulene A. This is 3-methylorcinaldehyde synthase from Sarocladium schorii (Acremonium strictum (strain IMI 501407)).